A 462-amino-acid polypeptide reads, in one-letter code: Succinate semialdehyde dehydrogenase [NAD(P)+] Sad (462 aa).

Residues 136-137 (WN), 160-163 (KHAP), and 212-213 (GS) each bind NADP(+). Glu-234 serves as the catalytic Proton acceptor. Position 235 (Leu-235) interacts with NADP(+). Cys-268 functions as the Nucleophile in the catalytic mechanism. Glu-365 contributes to the NADP(+) binding site.

The protein belongs to the aldehyde dehydrogenase family. Homodimer.

The enzyme catalyses succinate semialdehyde + NAD(+) + H2O = succinate + NADH + 2 H(+). It carries out the reaction succinate semialdehyde + NADP(+) + H2O = succinate + NADPH + 2 H(+). Its pathway is amino-acid degradation; 4-aminobutanoate degradation. Catalyzes the NAD(+)-dependent oxidation of succinate semialdehyde to succinate. It acts preferentially with NAD as cosubstrate but can also use NADP. Prevents the toxic accumulation of succinate semialdehyde (SSA) and plays an important role when arginine and putrescine are used as the sole nitrogen or carbon sources. This is Succinate semialdehyde dehydrogenase [NAD(P)+] Sad (sad) from Escherichia coli (strain K12).